Consider the following 305-residue polypeptide: MALDKSIVVNFTSRLFADELAALQSKIGSVLPLGDCHRLQNIQALGLGCVCSRETSPDYIQIMQYLSKCTLAVLEEVRPDSLRLTRMDPSDNLQIKNVYAPFFQWDSNTQLAVLPPFFSRKDSTIVLESNGFDLVFPMVVPQQLGHAILQQLLVYHIYSKISAGAPDDVNMAELDLYTTNVSFMGRTYRLDVDNTDPRTALRVLDDLSMYLCILSALVPRGCLRLLTALVRHDRHPLTEVFEGVVPDEVTRIDLDQLSVPDDITRMRVMFSYLQSLSSIFNLGPRLHVYAYSAETLAASCWYSPR.

The protein belongs to the herpesviridae TRX2 protein family. Interacts with TRX1 and major capisd protein/MCP.

Its subcellular location is the virion. The protein localises to the host nucleus. Its function is as follows. Structural component of the T=16 icosahedral capsid. The capsid is composed of pentamers and hexamers of major capsid protein/MCP, which are linked together by heterotrimers called triplexes. These triplexes are formed by a single molecule of triplex protein 1/TRX1 and two copies of triplex protein 2/TRX2. Additionally, TRX1 is required for efficient transport of TRX2 to the nucleus, which is the site of capsid assembly. The chain is Triplex capsid protein 2 from Homo sapiens (Human).